The following is a 460-amino-acid chain: ATP synthase subunit beta (460 aa).

150–157 (GGAGVGKT) contacts ATP.

This sequence belongs to the ATPase alpha/beta chains family. In terms of assembly, F-type ATPases have 2 components, CF(1) - the catalytic core - and CF(0) - the membrane proton channel. CF(1) has five subunits: alpha(3), beta(3), gamma(1), delta(1), epsilon(1). CF(0) has three main subunits: a(1), b(2) and c(9-12). The alpha and beta chains form an alternating ring which encloses part of the gamma chain. CF(1) is attached to CF(0) by a central stalk formed by the gamma and epsilon chains, while a peripheral stalk is formed by the delta and b chains.

It localises to the cell inner membrane. It carries out the reaction ATP + H2O + 4 H(+)(in) = ADP + phosphate + 5 H(+)(out). Produces ATP from ADP in the presence of a proton gradient across the membrane. The catalytic sites are hosted primarily by the beta subunits. The sequence is that of ATP synthase subunit beta from Klebsiella pneumoniae subsp. pneumoniae (strain ATCC 700721 / MGH 78578).